Consider the following 71-residue polypeptide: Small ribosomal subunit protein bS21B (71 aa).

This sequence belongs to the bacterial ribosomal protein bS21 family.

The polypeptide is Small ribosomal subunit protein bS21B (Rhizobium johnstonii (strain DSM 114642 / LMG 32736 / 3841) (Rhizobium leguminosarum bv. viciae)).